The chain runs to 46 residues: Protein krueppel (46 aa).

C2H2-type zinc fingers lie at residues 1–4 (MRLH), 10–32 (YHCT…LRVH), and 38–46 (YACELCTSK).

The protein belongs to the krueppel C2H2-type zinc-finger protein family.

It localises to the nucleus. Krueppel is a gap class segmentation protein. This chain is Protein krueppel (Kr), found in Lithobius forficatus (Centipede).